We begin with the raw amino-acid sequence, 883 residues long: Alanine--tRNA ligase (883 aa).

Zn(2+)-binding residues include H563, H567, C677, and H681.

This sequence belongs to the class-II aminoacyl-tRNA synthetase family. Zn(2+) serves as cofactor.

It localises to the cytoplasm. It catalyses the reaction tRNA(Ala) + L-alanine + ATP = L-alanyl-tRNA(Ala) + AMP + diphosphate. Functionally, catalyzes the attachment of alanine to tRNA(Ala) in a two-step reaction: alanine is first activated by ATP to form Ala-AMP and then transferred to the acceptor end of tRNA(Ala). Also edits incorrectly charged Ser-tRNA(Ala) and Gly-tRNA(Ala) via its editing domain. This is Alanine--tRNA ligase from Cereibacter sphaeroides (strain ATCC 17025 / ATH 2.4.3) (Rhodobacter sphaeroides).